Reading from the N-terminus, the 189-residue chain is dCTP deaminase (189 aa).

Residues 112 to 117, 136 to 138, Gln157, Tyr171, and Gln181 each bind dCTP; these read KSTYAR and TLE. Glu138 acts as the Proton donor/acceptor in catalysis.

It belongs to the dCTP deaminase family. As to quaternary structure, homotrimer.

It catalyses the reaction dCTP + H2O + H(+) = dUTP + NH4(+). It functions in the pathway pyrimidine metabolism; dUMP biosynthesis; dUMP from dCTP (dUTP route): step 1/2. Its function is as follows. Catalyzes the deamination of dCTP to dUTP. This is dCTP deaminase from Xanthomonas oryzae pv. oryzae (strain MAFF 311018).